The sequence spans 506 residues: Glutamate--tRNA ligase (506 aa).

The short motif at 23-33 (PSPTGTPHVGL) is the 'HIGH' region element. The 'KMSKS' region signature appears at 267-271 (KLSKR). Residue Lys270 participates in ATP binding.

It belongs to the class-I aminoacyl-tRNA synthetase family. Glutamate--tRNA ligase type 1 subfamily. In terms of assembly, monomer.

The protein localises to the cytoplasm. The enzyme catalyses tRNA(Glu) + L-glutamate + ATP = L-glutamyl-tRNA(Glu) + AMP + diphosphate. Catalyzes the attachment of glutamate to tRNA(Glu) in a two-step reaction: glutamate is first activated by ATP to form Glu-AMP and then transferred to the acceptor end of tRNA(Glu). This is Glutamate--tRNA ligase from Clavibacter sepedonicus (Clavibacter michiganensis subsp. sepedonicus).